Here is a 614-residue protein sequence, read N- to C-terminus: 1-deoxy-D-xylulose-5-phosphate synthase (614 aa).

Residues His74 and Ala115–Ser117 contribute to the thiamine diphosphate site. Mg(2+) is bound at residue Asp146. Thiamine diphosphate is bound by residues Gly147–Ala148, Asn175, Tyr282, and Glu363. Asn175 lines the Mg(2+) pocket.

The protein belongs to the transketolase family. DXPS subfamily. As to quaternary structure, homodimer. Mg(2+) is required as a cofactor. Requires thiamine diphosphate as cofactor.

The catalysed reaction is D-glyceraldehyde 3-phosphate + pyruvate + H(+) = 1-deoxy-D-xylulose 5-phosphate + CO2. Its pathway is metabolic intermediate biosynthesis; 1-deoxy-D-xylulose 5-phosphate biosynthesis; 1-deoxy-D-xylulose 5-phosphate from D-glyceraldehyde 3-phosphate and pyruvate: step 1/1. Its function is as follows. Catalyzes the acyloin condensation reaction between C atoms 2 and 3 of pyruvate and glyceraldehyde 3-phosphate to yield 1-deoxy-D-xylulose-5-phosphate (DXP). The chain is 1-deoxy-D-xylulose-5-phosphate synthase from Nitrosomonas eutropha (strain DSM 101675 / C91 / Nm57).